The following is a 289-amino-acid chain: ATP synthase gamma chain (289 aa).

The protein belongs to the ATPase gamma chain family. As to quaternary structure, F-type ATPases have 2 components, CF(1) - the catalytic core - and CF(0) - the membrane proton channel. CF(1) has five subunits: alpha(3), beta(3), gamma(1), delta(1), epsilon(1). CF(0) has three main subunits: a, b and c.

Its subcellular location is the cell inner membrane. Its function is as follows. Produces ATP from ADP in the presence of a proton gradient across the membrane. The gamma chain is believed to be important in regulating ATPase activity and the flow of protons through the CF(0) complex. The polypeptide is ATP synthase gamma chain (Polynucleobacter asymbioticus (strain DSM 18221 / CIP 109841 / QLW-P1DMWA-1) (Polynucleobacter necessarius subsp. asymbioticus)).